The primary structure comprises 201 residues: Ras-related protein Rab-35 (201 aa).

GTP contacts are provided by Gly18, Val19, Gly20, Lys21, Ser22, Ser23, Ser34, Gly35, Tyr37, Thr39, and Thr40. Residue Ser22 participates in Mg(2+) binding. The Switch 1 signature appears at 30–42 (DNTFSGSYITTIG). Positions 40 and 63 each coordinate Mg(2+). Residues 64 to 80 (TAGQERFRTITSTYYRG) carry the Switch 2 motif. GTP is bound at residue Gly66. At Thr72 the chain carries Phosphothreonine; by LRRK2. Ser75 carries the O-(2-cholinephosphoryl)serine modification. An O-AMP-tyrosine modification is found at Tyr77. GTP-binding residues include Asn120, Lys121, Asp123, Ala151, and Lys152. S-geranylgeranyl cysteine attachment occurs at residues Cys200 and Cys201.

It belongs to the small GTPase superfamily. Rab family. In terms of assembly, interacts with DENND1A and DENND1B; in a nucleotide-dependent manner. Interacts with DENND1C; weak interaction which is nucleotide-independent. Interacts (GTP-bound form) with ACAP2, RUSC2, OCRL MICAL1 and MICALL1; the interaction is direct and probably recruits these effectors to membranes. Interacts with EHD1; the interaction is indirect through MICALL1 and probably recruits EHD1 to membranes. Interacts with GDI1, GDI2, CHM and CHML; phosphorylation at Thr-72 by LRRK2 disrupts these interactions. Mg(2+) is required as a cofactor. Phosphorylation at Thr-72 by LRRK2 prevents the association of regulatory proteins including CHM, CHML and GDP dissociation inhibitors GDI1 and GDI2. Post-translationally, AMPylation at Tyr-77 by L.pneumophila DrrA occurs in the switch 2 region and leads to moderate inactivation of the GTPase activity. It appears to prolong the lifetime of the GTP state of RAB1B by restricting access of GTPase effectors to switch 2 and blocking effector-stimulated GTP hydrolysis, thereby rendering RAB35 constitutively active. In terms of processing, phosphocholinated by L.pneumophila AnkX. Both GDP-bound and GTP-bound forms can be phosphocholinated. Phosphocholination inhibits the GEF activity of DENND1A.

It localises to the cell membrane. The protein resides in the membrane. Its subcellular location is the clathrin-coated pit. The protein localises to the cytoplasmic vesicle. It is found in the clathrin-coated vesicle. It localises to the endosome. The protein resides in the melanosome. It carries out the reaction GTP + H2O = GDP + phosphate + H(+). Its activity is regulated as follows. Regulated by guanine nucleotide exchange factors (GEFs) including DENND1A, DENND1B and DENND1C which promote the exchange of bound GDP for free GTP. Regulated by GTPase activating proteins (GAPs) including TBC1D10 and TBC1D13 which increase GTP hydrolysis activity. Inhibited by GDP dissociation inhibitors (GDIs) which prevent Rab-GDP dissociation. Functionally, the small GTPases Rab are key regulators of intracellular membrane trafficking, from the formation of transport vesicles to their fusion with membranes. Rabs cycle between an inactive GDP-bound form and an active GTP-bound form that is able to recruit to membranes different sets of downstream effectors directly responsible for vesicle formation, movement, tethering and fusion. RAB35 is involved in the process of endocytosis and is an essential rate-limiting regulator of the fast recycling pathway back to the plasma membrane. During cytokinesis, required for the postfurrowing terminal steps, namely for intercellular bridge stability and abscission, possibly by controlling phosphatidylinositol 4,5-bis phosphate (PIP2) and SEPT2 localization at the intercellular bridge. May indirectly regulate neurite outgrowth. Together with TBC1D13 may be involved in regulation of insulin-induced glucose transporter SLC2A4/GLUT4 translocation to the plasma membrane in adipocytes. In Homo sapiens (Human), this protein is Ras-related protein Rab-35.